An 807-amino-acid polypeptide reads, in one-letter code: Glycerol-3-phosphate acyltransferase (807 aa).

Positions 305-310 (CHRSHM) match the HXXXXD motif motif.

This sequence belongs to the GPAT/DAPAT family.

The protein localises to the cell inner membrane. It carries out the reaction sn-glycerol 3-phosphate + an acyl-CoA = a 1-acyl-sn-glycero-3-phosphate + CoA. It functions in the pathway phospholipid metabolism; CDP-diacylglycerol biosynthesis; CDP-diacylglycerol from sn-glycerol 3-phosphate: step 1/3. This chain is Glycerol-3-phosphate acyltransferase, found in Vibrio atlanticus (strain LGP32) (Vibrio splendidus (strain Mel32)).